We begin with the raw amino-acid sequence, 98 residues long: MTTSPTTISTTTAATTTTTTPGKGTDSPMVYIEAMLFSMLVLILLIIVCAGYVHVKNLYYRSRYGVTAIYQQVEAECRGVSLGRSVDEPPYQSIYMPD.

The span at 1-21 (MTTSPTTISTTTAATTTTTTP) shows a compositional bias: low complexity. The segment at 1 to 26 (MTTSPTTISTTTAATTTTTTPGKGTD) is disordered. The chain crosses the membrane as a helical span at residues 29-49 (MVYIEAMLFSMLVLILLIIVC).

It localises to the host membrane. This is an uncharacterized protein from Equine herpesvirus 2 (strain 86/87) (EHV-2).